The sequence spans 464 residues: Elongation factor 1-alpha (464 aa).

Residues 5–242 (KTHINIVVIG…DSVVPPQRPT (238 aa)) enclose the tr-type G domain. GTP-binding positions include 14–21 (GHVDSGKS), 91–95 (DAPGH), and 153–156 (NKMD). A 5-glutamyl glycerylphosphorylethanolamine mark is found at Glu-301 and Glu-374.

The protein belongs to the TRAFAC class translation factor GTPase superfamily. Classic translation factor GTPase family. EF-Tu/EF-1A subfamily.

The protein resides in the cytoplasm. In terms of biological role, this protein promotes the GTP-dependent binding of aminoacyl-tRNA to the A-site of ribosomes during protein biosynthesis. The sequence is that of Elongation factor 1-alpha from Onchocerca volvulus.